We begin with the raw amino-acid sequence, 189 residues long: MFTAIDKIDRTFTVDQEFACLSSSTSSDSIGENSDDDEGGENEIESSYNGPLDMMESLEEALPIKRAISKFYKGKSKSFMSLSETSSLPVKDLTKPENLYSRRRRNLLSHRICSRGGISKKPFKSVLAMSQREGDSSSSGDDSLPTLRQHHKTLTPRLRKGSFGNCVPVVDSPRCFQTAAGRNIHNIIC.

Disordered regions lie at residues 22–49 (SSST…SSYN) and 128–147 (AMSQ…LPTL). Acidic residues predominate over residues 33 to 44 (NSDDDEGGENEI).

It localises to the nucleus. The sequence is that of Protein OXIDATIVE STRESS 3 LIKE 2 from Arabidopsis thaliana (Mouse-ear cress).